Here is a 201-residue protein sequence, read N- to C-terminus: Large ribosomal subunit protein uL4 (201 aa).

The tract at residues 44-68 is disordered; it reads KAQKTRSEVAGTTKKSKKQKGGGAR.

This sequence belongs to the universal ribosomal protein uL4 family. As to quaternary structure, part of the 50S ribosomal subunit.

In terms of biological role, one of the primary rRNA binding proteins, this protein initially binds near the 5'-end of the 23S rRNA. It is important during the early stages of 50S assembly. It makes multiple contacts with different domains of the 23S rRNA in the assembled 50S subunit and ribosome. Its function is as follows. Forms part of the polypeptide exit tunnel. In Xanthomonas campestris pv. campestris (strain 8004), this protein is Large ribosomal subunit protein uL4.